The primary structure comprises 702 residues: Amino-acid racemase (702 aa).

Residues 1 to 12 (MKHRANGIDLFR) lie on the Cytoplasmic side of the membrane. A helical membrane pass occupies residues 13–33 (IFAATMVVAIHTFPFQSIAPF). At 34 to 39 (LDEVIT) the chain is on the extracellular side. Residues 40–60 (LTVFRVAVPFFFMITGYFLLG) form a helical membrane-spanning segment. The Cytoplasmic segment spans residues 61–77 (RLSLNFSYNNNQRVKKY). A helical membrane pass occupies residues 78–98 (LYKIGMIYLYSILLYFPLSLL). Topologically, residues 99-120 (NGTISLKMNILLLLKVFIFDGT) are extracellular. A helical transmembrane segment spans residues 121 to 141 (FYHLWYFPASIIGTILVTLLL). Arginine 142 is a topological domain (cytoplasmic). A helical membrane pass occupies residues 143 to 163 (SIGFKLTVAFSTCLYLVGLGG). Residues 164 to 191 (DSWYGITNQVPLLNKLYTFIFSWSDYTR) lie on the Extracellular side of the membrane. Residues 192 to 212 (SGVFFTPVFLCLGIFAYRVSK) form a helical membrane-spanning segment. The Cytoplasmic portion of the chain corresponds to 213–218 (KLTASK). A helical transmembrane segment spans residues 219–239 (ILNLLFYVFIIGMTFESIFLH). The Extracellular segment spans residues 240 to 248 (RFTNVKHDS). Residues 249–269 (MYLLLPSCALILFLMLLNWQP) traverse the membrane as a helical segment. The Cytoplasmic segment spans residues 270–276 (KLKVKES). A helical membrane pass occupies residues 277-297 (ADLTLLVYILHPLVIVIVHSI). At 298-307 (SKYIPILKNS) the chain is on the extracellular side. A helical membrane pass occupies residues 308 to 328 (LLNFLLVVVCSFILAQLLLNL). Topologically, residues 329-702 (KRKLRVSKQK…LGSRLGTELN (374 aa)) are cytoplasmic. The racemase stretch occupies residues 337–702 (QKIPFERASK…LGSRLGTELN (366 aa)). Lysine 375 (proton acceptor) is an active-site residue. N6-(pyridoxal phosphate)lysine is present on lysine 375. Residue arginine 469 participates in substrate binding. Tyrosine 601 (proton acceptor) is an active-site residue. Methionine 650 contacts substrate.

This sequence in the N-terminal section; belongs to the acyltransferase 3 family. In the C-terminal section; belongs to the alanine racemase family. The cofactor is pyridoxal 5'-phosphate.

The protein resides in the cell membrane. This is Amino-acid racemase (vanTE) from Enterococcus faecalis (Streptococcus faecalis).